The primary structure comprises 319 residues: MDPQNQHGSGSSLVVIQQPSLDSRQRLDYEREIQPTAILSLDQIKAIRGSNEYTEGPSVVKRPAPRTAPRQEKHERTHEIIPINVNNNYEHRHTSHLGHAVLPSNARGPILSRSTSTGSAASSGSNSSASSEQGLLGRSPPTRPVPGHRSERAIRTQPKQLIVDDLKGSLKEDLTQHKFICEQCGKCKCGECTAPRTLPSCLACNRQCLCSAESMVEYGTCMCLVKGIFYHCSNDDEGDSYSDNPCSCSQSHCCSRYLCMGAMSLFLPCLLCYPPAKGCLKLCRRCYDWIHRPGCRCKNSNTVYCKLESCPSRGQGKPS.

Met1 is subject to N-acetylmethionine. Disordered regions lie at residues 54–78 and 100–160; these read TEGP…ERTH and AVLP…QPKQ. Over residues 69 to 78 the composition is skewed to basic and acidic residues; that stretch reads PRQEKHERTH. Low complexity predominate over residues 112–131; the sequence is SRSTSTGSAASSGSNSSASS. Positions 183 to 295 constitute an SPR domain; the sequence is QCGKCKCGEC…CYDWIHRPGC (113 aa).

This sequence belongs to the sprouty family. As to quaternary structure, forms heterodimers with SPRY2. Interacts with TESK1. Interacts with CAV1 (via C-terminus).

Its subcellular location is the cytoplasm. It is found in the membrane. Inhibits fibroblast growth factor (FGF)-induced retinal lens fiber differentiation, probably by inhibiting FGF-mediated phosphorylation of ERK1/2. Inhibits TGFB-induced epithelial-to-mesenchymal transition in lens epithelial cells. This chain is Protein sprouty homolog 1 (SPRY1), found in Homo sapiens (Human).